The primary structure comprises 180 residues: Adenine phosphoribosyltransferase (180 aa).

The protein belongs to the purine/pyrimidine phosphoribosyltransferase family. Homodimer.

The protein localises to the cytoplasm. It catalyses the reaction AMP + diphosphate = 5-phospho-alpha-D-ribose 1-diphosphate + adenine. It participates in purine metabolism; AMP biosynthesis via salvage pathway; AMP from adenine: step 1/1. Its function is as follows. Catalyzes a salvage reaction resulting in the formation of AMP, that is energically less costly than de novo synthesis. This is Adenine phosphoribosyltransferase from Sinorhizobium medicae (strain WSM419) (Ensifer medicae).